The primary structure comprises 297 residues: 4-hydroxy-tetrahydrodipicolinate synthase (297 aa).

T45 contributes to the pyruvate binding site. Catalysis depends on Y133, which acts as the Proton donor/acceptor. Residue K161 is the Schiff-base intermediate with substrate of the active site. Residue I203 participates in pyruvate binding.

The protein belongs to the DapA family. Homotetramer; dimer of dimers.

The protein resides in the cytoplasm. It catalyses the reaction L-aspartate 4-semialdehyde + pyruvate = (2S,4S)-4-hydroxy-2,3,4,5-tetrahydrodipicolinate + H2O + H(+). It participates in amino-acid biosynthesis; L-lysine biosynthesis via DAP pathway; (S)-tetrahydrodipicolinate from L-aspartate: step 3/4. Functionally, catalyzes the condensation of (S)-aspartate-beta-semialdehyde [(S)-ASA] and pyruvate to 4-hydroxy-tetrahydrodipicolinate (HTPA). This is 4-hydroxy-tetrahydrodipicolinate synthase from Buchnera aphidicola subsp. Cinara cedri (strain Cc).